The sequence spans 1110 residues: Guanylate cyclase 2D (1110 aa).

An N-terminal signal peptide occupies residues 1–66 (MAGLQQGCHP…ADSLSLPAWA (66 aa)). Topologically, residues 67–475 (RETFTLGVLG…PNTLCIRGVQ (409 aa)) are extracellular. The cysteines at positions 121 and 149 are disulfide-linked. Residues asparagine 304 and asparagine 374 are each glycosylated (N-linked (GlcNAc...) asparagine). A helical membrane pass occupies residues 476 to 500 (PLGSLLTLTITCVLALVGGFLAYFI). At 501 to 1110 (RLGLQQLRLL…TGFAKLARVG (610 aa)) the chain is on the cytoplasmic side. The tract at residues 529-556 (TPSRRRPHVDSGSESRSVVDGGSPQSVI) is disordered. The region spanning 541–818 (SESRSVVDGG…PSLDQIYTQF (278 aa)) is the Protein kinase domain. Residues 880 to 921 (MGTTVEPEYFDQVTIYFSDIVGFTTISALSEPIEVVGFLNDL) form an interaction with NCALD region. One can recognise a Guanylate cyclase domain in the interval 893-1023 (TIYFSDIVGF…DTVNTASRME (131 aa)).

This sequence belongs to the adenylyl cyclase class-4/guanylyl cyclase family. Interacts (via the catalytic domain) with NCALD. Specifically expressed in a subpopulation of olfactory sensory neurons. Expressed in the cilia of the olfactory epithelium.

It is found in the cell projection. Its subcellular location is the cilium membrane. The catalysed reaction is GTP = 3',5'-cyclic GMP + diphosphate. Its activity is regulated as follows. Activated by Ca(2+). Activated by NCALD in a Ca(2+)-dependent fashion. In terms of biological role, functions as an olfactory receptor activated by a urine odorant, uroguanylin. Activated as well by the volatile semiochemicals carbon disulfide (CS2) and carbon dioxide (CO2). Has guanylate cyclase activity upon binding of the ligand. Activation of GUCY2D neurons leads to the cGMP-dependent activation of the CNGA3 channels, membrane depolarization and an increase in action potential frequency. Signaling pathways activated by GUCY2D may trigger social behaviors such as acquisition of food preference. This Rattus norvegicus (Rat) protein is Guanylate cyclase 2D (Gucy2d).